A 172-amino-acid polypeptide reads, in one-letter code: Shikimate kinase (172 aa).

11–16 lines the ATP pocket; it reads GAGKST. Serine 15 serves as a coordination point for Mg(2+). Positions 33, 57, and 79 each coordinate substrate. Arginine 117 is an ATP binding site. Arginine 136 is a substrate binding site. Arginine 153 contributes to the ATP binding site.

Belongs to the shikimate kinase family. As to quaternary structure, monomer. It depends on Mg(2+) as a cofactor.

It localises to the cytoplasm. The catalysed reaction is shikimate + ATP = 3-phosphoshikimate + ADP + H(+). It participates in metabolic intermediate biosynthesis; chorismate biosynthesis; chorismate from D-erythrose 4-phosphate and phosphoenolpyruvate: step 5/7. Functionally, catalyzes the specific phosphorylation of the 3-hydroxyl group of shikimic acid using ATP as a cosubstrate. The protein is Shikimate kinase of Pseudomonas aeruginosa (strain LESB58).